We begin with the raw amino-acid sequence, 89 residues long: Small ribosomal subunit protein uS15 (89 aa).

The protein belongs to the universal ribosomal protein uS15 family. In terms of assembly, part of the 30S ribosomal subunit. Forms a bridge to the 50S subunit in the 70S ribosome, contacting the 23S rRNA.

In terms of biological role, one of the primary rRNA binding proteins, it binds directly to 16S rRNA where it helps nucleate assembly of the platform of the 30S subunit by binding and bridging several RNA helices of the 16S rRNA. Its function is as follows. Forms an intersubunit bridge (bridge B4) with the 23S rRNA of the 50S subunit in the ribosome. This is Small ribosomal subunit protein uS15 from Thiobacillus denitrificans (strain ATCC 25259 / T1).